Consider the following 270-residue polypeptide: 2-aminoethanethiol dioxygenase (270 aa).

The segment at 21-48 is disordered; it reads FRGSGGGRGASDRDAASGPEAPMQPGFP. Residues histidine 112 and histidine 114 each coordinate Fe cation. The segment at 140–164 is disordered; it reads GGQRPRALPPEQQFEPPLQPREREA. A Fe cation-binding site is contributed by histidine 193. The 3'-(S-cysteinyl)-tyrosine (Cys-Tyr) cross-link spans 220 to 223; sequence CHYY.

As to quaternary structure, monomer. It depends on Fe cation as a cofactor.

The enzyme catalyses cysteamine + O2 = hypotaurine + H(+). It catalyses the reaction N-terminal L-cysteinyl-[protein] + O2 = N-terminal S-hydroxy-S-oxy-L-cysteinyl-[protein] + H(+). Its function is as follows. Plays a vital role in regulating thiol metabolism and preserving oxygen homeostasis by oxidizing the sulfur of cysteamine and N-terminal cysteine-containing proteins to their corresponding sulfinic acids using O2 as a cosubstrate. Catalyzes the oxidation of cysteamine (2-aminoethanethiol) to hypotaurine. Catalyzes the oxidation of regulators of G-protein signaling 4 (RGS4) and 5 (RGS5) and interleukin-32 (IL32). The chain is 2-aminoethanethiol dioxygenase (ADO) from Homo sapiens (Human).